We begin with the raw amino-acid sequence, 505 residues long: Kelch-like protein 42 (505 aa).

In terms of domain architecture, BTB spans 5–78; it reads EMVQIRLEDR…INAGGAREGW (74 aa). Position 43 is a phosphoserine (Ser-43). Kelch repeat units lie at residues 176–234, 235–282, 284–325, 327–372, 374–429, and 431–480; these read PGDV…PLAN, NLPP…NEWL, VASM…DAWN, VAPL…DMWT, FETC…RQWL, and LKEN…DSWE.

In terms of assembly, component of the BCR(KLHL42) E3 ubiquitin ligase complex, at least composed of CUL3 and KLHL42. Interacts (via the BTB domain) with CUL3. Interacts (via the kelch domains) with KATNA1.

The protein resides in the cytoplasm. Its subcellular location is the cytoskeleton. It localises to the spindle. It participates in protein modification; protein ubiquitination. In terms of biological role, substrate-specific adapter of a BCR (BTB-CUL3-RBX1) E3 ubiquitin-protein ligase complex required for mitotic progression and cytokinesis. The BCR(KLHL42) E3 ubiquitin ligase complex mediates the ubiquitination and subsequent degradation of KATNA1. Involved in microtubule dynamics throughout mitosis. This is Kelch-like protein 42 (KLHL42) from Homo sapiens (Human).